The sequence spans 320 residues: tRNA U34 carboxymethyltransferase (320 aa).

Carboxy-S-adenosyl-L-methionine-binding positions include Lys-89, Trp-103, Lys-108, Gly-128, 150–152 (DPT), 179–180 (IE), Met-194, Tyr-198, and Arg-313.

This sequence belongs to the class I-like SAM-binding methyltransferase superfamily. CmoB family. In terms of assembly, homotetramer.

The enzyme catalyses carboxy-S-adenosyl-L-methionine + 5-hydroxyuridine(34) in tRNA = 5-carboxymethoxyuridine(34) in tRNA + S-adenosyl-L-homocysteine + H(+). Its function is as follows. Catalyzes carboxymethyl transfer from carboxy-S-adenosyl-L-methionine (Cx-SAM) to 5-hydroxyuridine (ho5U) to form 5-carboxymethoxyuridine (cmo5U) at position 34 in tRNAs. The polypeptide is tRNA U34 carboxymethyltransferase (Actinobacillus pleuropneumoniae serotype 7 (strain AP76)).